We begin with the raw amino-acid sequence, 327 residues long: Ribosomal RNA small subunit methyltransferase H (327 aa).

S-adenosyl-L-methionine-binding positions include 37–39 (GGY), Asp55, Phe82, Asp99, and Gln106. The segment at 303-327 (IATRTDAPAQPVAPETLGLPQLEGF) is disordered.

This sequence belongs to the methyltransferase superfamily. RsmH family.

The protein localises to the cytoplasm. The catalysed reaction is cytidine(1402) in 16S rRNA + S-adenosyl-L-methionine = N(4)-methylcytidine(1402) in 16S rRNA + S-adenosyl-L-homocysteine + H(+). Specifically methylates the N4 position of cytidine in position 1402 (C1402) of 16S rRNA. In Jannaschia sp. (strain CCS1), this protein is Ribosomal RNA small subunit methyltransferase H.